Here is a 425-residue protein sequence, read N- to C-terminus: Polyribonucleotide 5'-hydroxyl-kinase Clp1 (425 aa).

ATP contacts are provided by residues E22, K62, and 124–129 (DVGKST).

The protein belongs to the Clp1 family. Clp1 subfamily. As to quaternary structure, component of the tRNA splicing endonuclease complex, composed of CLP1, TSEN2, TSEN15, TSEN34 and TSEN54. Component of pre-mRNA cleavage complex II (CF-II). Also associates with numerous components of the pre-mRNA cleavage complex I (CF-I/CFIm), including NUDT21, CPSF2, CPSF3, CPSF6 and CPSF7. Interacts with CSTF2 and SYMPK. Mg(2+) serves as cofactor. It depends on Mn(2+) as a cofactor. Requires Ni(2+) as cofactor.

The protein localises to the nucleus. It catalyses the reaction a 5'-end dephospho-2'-deoxyribonucleoside-DNA + ATP = a 5'-end 5'-phospho-2'-deoxyribonucleoside-DNA + ADP + H(+). The enzyme catalyses a 5'-end dephospho-ribonucleoside-RNA + ATP = a 5'-end 5'-phospho-ribonucleoside-RNA + ADP + H(+). In terms of biological role, polynucleotide kinase that can phosphorylate the 5'-hydroxyl groups of double-stranded RNA (dsRNA), single-stranded RNA (ssRNA), double-stranded DNA (dsDNA) and double-stranded DNA:RNA hybrids. dsRNA is phosphorylated more efficiently than dsDNA, and the RNA component of a DNA:RNA hybrid is phosphorylated more efficiently than the DNA component. Plays a key role in both tRNA splicing and mRNA 3'-end formation. Component of the tRNA splicing endonuclease complex: phosphorylates the 5'-terminus of the tRNA 3'-exon during tRNA splicing; this phosphorylation event is a prerequisite for the subsequent ligation of the two exon halves and the production of a mature tRNA. Its role in tRNA splicing and maturation is required for cerebellar development. Component of the pre-mRNA cleavage complex II (CF-II), which seems to be required for mRNA 3'-end formation. Also phosphorylates the 5'-terminus of exogenously introduced short interfering RNAs (siRNAs), which is a necessary prerequisite for their incorporation into the RNA-induced silencing complex (RISC). However, endogenous siRNAs and microRNAs (miRNAs) that are produced by the cleavage of dsRNA precursors by DICER1 already contain a 5'-phosphate group, so this protein may be dispensible for normal RNA-mediated gene silencing. The polypeptide is Polyribonucleotide 5'-hydroxyl-kinase Clp1 (Homo sapiens (Human)).